Here is a 427-residue protein sequence, read N- to C-terminus: Trigger factor (427 aa).

The region spanning 160–240 (TDTVIGDVEK…VKEVKRLELP (81 aa)) is the PPIase FKBP-type domain.

It belongs to the FKBP-type PPIase family. Tig subfamily.

The protein localises to the cytoplasm. The catalysed reaction is [protein]-peptidylproline (omega=180) = [protein]-peptidylproline (omega=0). Involved in protein export. Acts as a chaperone by maintaining the newly synthesized protein in an open conformation. Functions as a peptidyl-prolyl cis-trans isomerase. The sequence is that of Trigger factor from Chlorobium phaeobacteroides (strain DSM 266 / SMG 266 / 2430).